Consider the following 355-residue polypeptide: MFLVLLRACLLTLSLCSPAEDDGLVQEKLFLSSMGLWSRPKPSHHAAVPSQMWKIFKQASKQTVNDPCVVSEYGVRGNIVRFMQDQGSLISAPAVHSFNCVRKHLFFNMSVLEEVEQLSLAQLEMKFKQDLLLLGPHVFSVDLYRVLKTTLKGVTHESSRKLLQSQTLSPGAHASVLVNLTNLAQSWRKPEKNFGMQLELQVMHLNNMLHDHAYVQIPDIHATLVVVSLNPLQCRSRRKRSASYYLPVTPSNVCKPRRLYIDFKDVGWQDWIIAPQGYLANYCHGECPFPLSESLNGTNHAILQTLVHSFDPKGTPQPCCVPIKLSPISMLYYDNNDNVVLRHYEDMVVDECGCR.

The N-terminal stretch at 1 to 15 (MFLVLLRACLLTLSL) is a signal peptide. Positions 16–240 (CSPAEDDGLV…PLQCRSRRKR (225 aa)) are excised as a propeptide. 3 N-linked (GlcNAc...) asparagine glycosylation sites follow: asparagine 108, asparagine 179, and asparagine 296. Intrachain disulfides connect cysteine 254-cysteine 320, cysteine 283-cysteine 352, and cysteine 287-cysteine 354.

This sequence belongs to the TGF-beta family. Homodimer. Abundant in ovaries and eggs, and equally distributed among all blastomeres.

The protein resides in the secreted. Its function is as follows. Serves to facilitate the differentiation of either mesoderm or endoderm either as a cofactor in an instructive signal or by providing permissive environment. This is Protein DVR-1 (dvr1) from Danio rerio (Zebrafish).